Reading from the N-terminus, the 758-residue chain is Photosystem I P700 chlorophyll a apoprotein A1 (758 aa).

The next 8 membrane-spanning stretches (helical) occupy residues 78 to 101 (VFSAHFGQLSIIFLWLSGMYFHGA), 164 to 187 (LYCTAIGALVFAGLMLFAGWFHYH), 203 to 227 (LNHHLAGLLGLGSLSWARHQVHVSL), 299 to 317 (IAHHHLAIAILFLIAGHMY), 354 to 377 (WHAQLSINLAMLGSLTIVVAQHMY), 393 to 419 (LSLFTHHMWIGGFLIVGAAAHAAIFMV), 441 to 463 (AIISHLNWVCIFLGFHSFGLYIH), and 539 to 557 (FLVHHIHAFTIHVTVLILL). [4Fe-4S] cluster is bound by residues Cys-581 and Cys-590. Helical transmembrane passes span 597–618 (HVFLGLFWMYNSISVVIFHFSW) and 672–694 (LSAYGLFFLGAHFVWAFSLMFLF). His-683 contacts chlorophyll a'. Residues Met-691 and Tyr-699 each contribute to the chlorophyll a site. A phylloquinone-binding site is contributed by Trp-700. Residues 732 to 753 (AVGVTHYLLGGIATTWAFFLAR) traverse the membrane as a helical segment.

It belongs to the PsaA/PsaB family. The PsaA/B heterodimer binds the P700 chlorophyll special pair and subsequent electron acceptors. PSI consists of a core antenna complex that captures photons, and an electron transfer chain that converts photonic excitation into a charge separation. The eukaryotic PSI reaction center is composed of at least 11 subunits. P700 is a chlorophyll a/chlorophyll a' dimer, A0 is one or more chlorophyll a, A1 is one or both phylloquinones and FX is a shared 4Fe-4S iron-sulfur center. serves as cofactor.

It is found in the plastid. The protein localises to the chloroplast thylakoid membrane. It carries out the reaction reduced [plastocyanin] + hnu + oxidized [2Fe-2S]-[ferredoxin] = oxidized [plastocyanin] + reduced [2Fe-2S]-[ferredoxin]. Functionally, psaA and PsaB bind P700, the primary electron donor of photosystem I (PSI), as well as the electron acceptors A0, A1 and FX. PSI is a plastocyanin-ferredoxin oxidoreductase, converting photonic excitation into a charge separation, which transfers an electron from the donor P700 chlorophyll pair to the spectroscopically characterized acceptors A0, A1, FX, FA and FB in turn. Oxidized P700 is reduced on the lumenal side of the thylakoid membrane by plastocyanin. The protein is Photosystem I P700 chlorophyll a apoprotein A1 of Pisum sativum (Garden pea).